We begin with the raw amino-acid sequence, 144 residues long: Maximins 5/H4 type 3 (144 aa).

The N-terminal stretch at 1-18 (MNFKYIVAVSFLIASAYA) is a signal peptide. Propeptides lie at residues 19-43 (RSVQNDEQSLSQRDVLEEESLREIR) and 74-123 (TAED…KEKR). Leucine 143 is modified (leucine amide).

The protein belongs to the bombinin family. As to expression, expressed by the skin glands.

The protein resides in the secreted. Its function is as follows. Maximin-5 shows antibacterial activity against both Gram-positive and Gram-negative bacteria. The only exception is the resistance of E.coli. Also shows antimicrobial activity against fungi C.albicans, A.flavus and P.uticale. It has little hemolytic activity. It does not possess a significant cytotoxicity against tumor cell lines. It does not possess a significant anti-HIV activity. In terms of biological role, maximin-H4 shows antibacterial activity against both Gram-positive and Gram-negative bacteria. It also shows antimicrobial activity against the fungus C.albicans. Shows strong hemolytic activity. In Bombina maxima (Giant fire-bellied toad), this protein is Maximins 5/H4 type 3.